The primary structure comprises 234 residues: Demethylmenaquinone methyltransferase (234 aa).

S-adenosyl-L-methionine-binding positions include Thr-58, Asp-79, and 106–107 (NA).

Belongs to the class I-like SAM-binding methyltransferase superfamily. MenG/UbiE family.

It carries out the reaction a 2-demethylmenaquinol + S-adenosyl-L-methionine = a menaquinol + S-adenosyl-L-homocysteine + H(+). The protein operates within quinol/quinone metabolism; menaquinone biosynthesis; menaquinol from 1,4-dihydroxy-2-naphthoate: step 2/2. Functionally, methyltransferase required for the conversion of demethylmenaquinol (DMKH2) to menaquinol (MKH2). The sequence is that of Demethylmenaquinone methyltransferase from Geobacillus sp. (strain WCH70).